The primary structure comprises 239 residues: Gamma-lactamase MBL2 (239 aa).

6 residues coordinate Zn(2+): H56, H58, D60, H61, H141, and D165.

Belongs to the metallo-beta-lactamase superfamily.

Gamma-lactamase; part of the Fusarium detoxification of benzoxazolinone cluster 2 (FDB2) involved in the degradation of benzoxazolinones produced by the host plant. Maize, wheat, and rye produce the 2 benzoxazinone phytoanticipins 2,4-dihy-droxy-7-methoxy-1,4-benzoxazin-3-one (DIMBOA) and 2,4-dihydroxy-1,4-benzoxazin-3-one (DIBOA) that, due to their inherent instability once released, spontaneously degrade to the more stable corresponding benzoxazolinones, 6-methoxy-2-benzoxazolinone (MBOA) and 2-benzoxazolinone (BOA), respectively. The first step in the detoxification of benzoxazolinones involves the hydrolysis of the cyclic ester bond of benzoxazolinones by the FDB1 cluster gamma-lactamase MBL1 to aminophenols. MBL1 is able to convert BOA into 2-aminophenol (2-AP), as well as MBOA into 5-methoxy-2-aminophenol (2-AMP). The FDB2 cluster N-malonyltransferase FDB2/NAT1 then metabolizes aminophenols via N-malonylation to non-toxic malonamic acids. FDB2/NAT1 converts 2-AP into N-(2-hydroxyphenyl) malonamic acid (HPMA) and 2-AMP into N-(2-hydroxy-4-methoxyphenyl) malonamic acid (HMPMA). The duplicated dienlactone hydrolases DLH1 and DLH2 may provide redundant function for hydrolyzing the lactone moiety in the BOA molecule. The roles of the amidases and other enzymes encoded by the 2 FDB clusters have not been identified so far. In Gibberella moniliformis (strain M3125 / FGSC 7600) (Maize ear and stalk rot fungus), this protein is Gamma-lactamase MBL2.